Reading from the N-terminus, the 3977-residue chain is Hybrid PKS-NRPS synthetase gkaA (3977 aa).

The region spanning 4 to 441 (EEPIAVIGSG…GTNAHVILEN (438 aa)) is the Ketosynthase family 3 (KS3) domain. Active-site for beta-ketoacyl synthase activity residues include C177, H316, and H361. The Malonyl-CoA:ACP transacylase (MAT) domain occupies 551–867 (VFTGQGAQWP…TGVIHRGKND (317 aa)). Residues 937-1072 (NPLLGTRTTD…GRITVTLGES (136 aa)) form an N-terminal hotdog fold region. A PKS/mFAS DH domain is found at 937 to 1241 (NPLLGTRTTD…VVAFSEATAD (305 aa)). H969 serves as the catalytic Proton acceptor; for dehydratase activity. The tract at residues 1087–1241 (LVSIPQDRFY…VVAFSEATAD (155 aa)) is C-terminal hotdog fold. D1147 acts as the Proton donor; for dehydratase activity in catalysis. The tract at residues 1286 to 1580 (YMKKTVEEFP…FSGIDSSTPE (295 aa)) is methyltransferase (cMeT) domain. The Ketoreductase (KR) domain occupies 2128–2301 (TYVLFGLTSD…AASILHIGAV (174 aa)). One can recognise a Carrier 1 domain in the interval 2409–2490 (SEVFEIISGA…QLLEYAIDNM (82 aa)). S2450 bears the O-(pantetheine 4'-phosphoryl)serine mark. The segment at 2497-2542 (HSNGEQGTVSDSGSTNIQLTPASTPSVPSVNLASDSTGSSQVGEDV) is disordered. The segment covering 2499 to 2538 (NGEQGTVSDSGSTNIQLTPASTPSVPSVNLASDSTGSSQV) has biased composition (polar residues). The interval 2584 to 3018 (EKIIPMSPGQ…LKDISLFSKE (435 aa)) is condensation. The adenylation stretch occupies residues 3048-3437 (IAEHPDTISI…GALEILGRID (390 aa)). One can recognise a Carrier 2 domain in the interval 3552-3632 (FSLTPTEDKL…AMASLITPAS (81 aa)). At S3592 the chain carries O-(pantetheine 4'-phosphoryl)serine. Residues 3672–3890 (LTGATGFLGH…FVDLVSVQNV (219 aa)) enclose the Thioester reductase (TE) domain.

The protein in the C-terminal section; belongs to the NRP synthetase family. It depends on pantetheine 4'-phosphate as a cofactor.

It functions in the pathway mycotoxin biosynthesis. Its function is as follows. Hybrid PKS-NRPS synthetase; part of the gene cluster that mediates the biosynthesis of GKK1032, fungal natural products containing a macrocyclic para-cyclophane connected to a decahydrofluorene ring system that show potent antitumor activities. Within the pathway, the PKS-NRPS gkaA, with the help of the trans-enoyl reductase gkaC, synthesize the polyketide-tyrosyl acyl thioester product which can be reductively off-loaded by the terminal reductase (R) domain in gkaA. The PKS module of gkaA acts in combination with the trans-acting enoyl reductase gkaC to produce a methylated polyketide attached to the ACP domain. In parallel, the adenylation (A) domain of the NRPS module activated L-tyrosine, which is then transferred to the ACP domain. The condensation (C) domain subsequently links this group to the polyketide chain, forming an enzyme-bound amide. The alpha/beta hydrolase gkaG is then required to catalyze the subsequent Knoevenagel condensation that affords the 3-pyrrolin-2-one ring, whereas the three proteins gkaB, gkadX and gkaZ then function synergistically to form the cyclophane. This chain is Hybrid PKS-NRPS synthetase gkaA, found in Penicillium citrinum.